We begin with the raw amino-acid sequence, 178 residues long: Inner membrane-spanning protein YciB (178 aa).

The next 5 membrane-spanning stretches (helical) occupy residues 22-42, 50-70, 76-96, 121-141, and 149-169; these read IFVA…VSWL, MALF…ALHN, WKVT…HWFM, IAWA…AFWL, and FKVF…GIYI.

Belongs to the YciB family.

It localises to the cell inner membrane. In terms of biological role, plays a role in cell envelope biogenesis, maintenance of cell envelope integrity and membrane homeostasis. The sequence is that of Inner membrane-spanning protein YciB from Erwinia tasmaniensis (strain DSM 17950 / CFBP 7177 / CIP 109463 / NCPPB 4357 / Et1/99).